Reading from the N-terminus, the 333-residue chain is Prenyltransferase stbC (333 aa).

A run of 8 helical transmembrane segments spans residues 74-94, 125-145, 147-164, 173-193, 201-221, 247-267, 272-292, and 304-324; these read VAFQ…AGCA, ANIF…PLPA, CQRL…YPFC, VILG…AGLP, VPTI…DVVY, ILLT…GVLV, YFFV…IGGI, and SGWF…IEYL.

This sequence belongs to the UbiA prenyltransferase family.

Its subcellular location is the membrane. It carries out the reaction orsellinate + (2E,6E)-farnesyl diphosphate = ilicicolinate B + diphosphate. The protein operates within secondary metabolite biosynthesis; terpenoid biosynthesis. Prenyltransferase; part of the cluster that mediates the biosynthesis of LL-Z1272-beta, also known as ilicicolin B, a prenylated aryl-aldehyde produced by several fungi and that serves as a key pathway intermediate for many fungal meroterpenoids. The first step in the pathway is performed by the non-reducing polyketide synthase stbA that produces orsellinic acid by condensing acetyl-CoA with 3 malonyl-CoA units. The prenyltransferase stbC then prenylates orsenilic acid into grifolic acid. Finally, grifolic acid is reduced to ilicicolin B by the NRPS-like protein stbB. The sequence is that of Prenyltransferase stbC from Stachybotrys bisbyi (Hyalostachybotrys bisbyi).